A 453-amino-acid polypeptide reads, in one-letter code: Tubulin alpha chain (453 aa).

Glutamine 11 serves as a coordination point for GTP. Lysine 40 carries the N6-acetyllysine modification. Residues glutamate 71, glycine 144, threonine 145, threonine 179, asparagine 206, and asparagine 228 each coordinate GTP. Glutamate 71 contributes to the Mg(2+) binding site. The active site involves glutamate 254.

It belongs to the tubulin family. Dimer of alpha and beta chains. A typical microtubule is a hollow water-filled tube with an outer diameter of 25 nm and an inner diameter of 15 nM. Alpha-beta heterodimers associate head-to-tail to form protofilaments running lengthwise along the microtubule wall with the beta-tubulin subunit facing the microtubule plus end conferring a structural polarity. Microtubules usually have 13 protofilaments but different protofilament numbers can be found in some organisms and specialized cells. The cofactor is Mg(2+). Undergoes a tyrosination/detyrosination cycle, the cyclic removal and re-addition of a C-terminal tyrosine residue by the enzymes tubulin tyrosine carboxypeptidase (TTCP) and tubulin tyrosine ligase (TTL), respectively. In terms of processing, acetylation of alpha chains at Lys-40 stabilizes microtubules and affects affinity and processivity of microtubule motors. This modification has a role in multiple cellular functions, ranging from cell motility, cell cycle progression or cell differentiation to intracellular trafficking and signaling.

It localises to the cytoplasm. The protein localises to the cytoskeleton. It catalyses the reaction GTP + H2O = GDP + phosphate + H(+). Its function is as follows. Tubulin is the major constituent of microtubules, a cylinder consisting of laterally associated linear protofilaments composed of alpha- and beta-tubulin heterodimers. Microtubules grow by the addition of GTP-tubulin dimers to the microtubule end, where a stabilizing cap forms. Below the cap, tubulin dimers are in GDP-bound state, owing to GTPase activity of alpha-tubulin. This Plasmodium falciparum (isolate K1 / Thailand) protein is Tubulin alpha chain.